The primary structure comprises 484 residues: Probable cytochrome P450 316a1 (484 aa).

A heme-binding site is contributed by cysteine 433.

This sequence belongs to the cytochrome P450 family. Heme is required as a cofactor.

It is found in the endoplasmic reticulum membrane. Its subcellular location is the microsome membrane. Functionally, may be involved in the metabolism of insect hormones and in the breakdown of synthetic insecticides. The sequence is that of Probable cytochrome P450 316a1 (Cyp316a1) from Drosophila melanogaster (Fruit fly).